We begin with the raw amino-acid sequence, 214 residues long: MPSLLVVIFVIELFVQLVNTIGAATINNLLWRIALSLPLPLSAQFAAQRKKQKEYLAIRRELNATSSQDEFAKWARLRRQHDKLLEDLEKRKKELDAAKTKFDRTLTTVRVVATRGLQWFLPFWYSREPMFWLPYGWFPYYVEWFASFPRAPLGSVSIVVWQWACTGVIKLVIETVMAVVGLIVAARQKQQEKQKAKQAVPAAGGGDSKAEEAK.

Over 1–4 (MPSL) the chain is Lumenal. Residues 5 to 24 (LVVIFVIELFVQLVNTIGAA) form a helical membrane-spanning segment. The Cytoplasmic segment spans residues 25-110 (TINNLLWRIA…KFDRTLTTVR (86 aa)). The stretch at 73-107 (KWARLRRQHDKLLEDLEKRKKELDAAKTKFDRTLT) forms a coiled coil. A helical transmembrane segment spans residues 111-131 (VVATRGLQWFLPFWYSREPMF). Topologically, residues 132–155 (WLPYGWFPYYVEWFASFPRAPLGS) are lumenal. Residues 156 to 172 (VSIVVWQWACTGVIKLV) form a helical membrane-spanning segment. At 173 to 214 (IETVMAVVGLIVAARQKQQEKQKAKQAVPAAGGGDSKAEEAK) the chain is on the cytoplasmic side. The segment at 190–214 (QQEKQKAKQAVPAAGGGDSKAEEAK) is disordered.

It belongs to the WRB/GET1 family. As to quaternary structure, interacts with GET3.

It is found in the endoplasmic reticulum membrane. Required for the post-translational delivery of tail-anchored (TA) proteins to the endoplasmic reticulum. Acts as a membrane receptor for soluble GET3, which recognizes and selectively binds the transmembrane domain of TA proteins in the cytosol. The chain is Protein get-1 (get-1) from Neurospora crassa (strain ATCC 24698 / 74-OR23-1A / CBS 708.71 / DSM 1257 / FGSC 987).